A 255-amino-acid chain; its full sequence is Ribonuclease HII (255 aa).

The RNase H type-2 domain maps to 72 to 255; sequence RLIAGIDEVG…RTFAPIKDMI (184 aa). Positions 78, 79, and 170 each coordinate a divalent metal cation.

The protein belongs to the RNase HII family. It depends on Mn(2+) as a cofactor. Mg(2+) is required as a cofactor.

It localises to the cytoplasm. The catalysed reaction is Endonucleolytic cleavage to 5'-phosphomonoester.. Endonuclease that specifically degrades the RNA of RNA-DNA hybrids. The chain is Ribonuclease HII from Enterococcus faecalis (strain ATCC 700802 / V583).